Here is a 221-residue protein sequence, read N- to C-terminus: Epididymal secretory glutathione peroxidase (221 aa).

An N-terminal signal peptide occupies residues 1 to 21; that stretch reads MTTQLRVVHLLPLLLACFVQT. Residue cysteine 73 is part of the active site.

The protein belongs to the glutathione peroxidase family. In terms of tissue distribution, epididymis.

The protein localises to the secreted. It catalyses the reaction 2 glutathione + H2O2 = glutathione disulfide + 2 H2O. Protects cells and enzymes from oxidative damage, by catalyzing the reduction of hydrogen peroxide, lipid peroxides and organic hydroperoxide, by glutathione. May constitute a glutathione peroxidase-like protective system against peroxide damage in sperm membrane lipids. In Macaca fascicularis (Crab-eating macaque), this protein is Epididymal secretory glutathione peroxidase (GPX5).